Here is a 109-residue protein sequence, read N- to C-terminus: Small ribosomal subunit protein bS6 (109 aa).

This sequence belongs to the bacterial ribosomal protein bS6 family.

Binds together with bS18 to 16S ribosomal RNA. In Dehalococcoides mccartyi (strain CBDB1), this protein is Small ribosomal subunit protein bS6.